Reading from the N-terminus, the 429-residue chain is Protein ABERRANT PANICLE ORGANIZATION 1 (429 aa).

Residues 1–11 are compositionally biased toward pro residues; the sequence is MMNPRRLPPLP. The disordered stretch occupies residues 1-21; it reads MMNPRRLPPLPSSTSSASAAD. The F-box domain occupies 25–71; sequence PRVWRRLPQPLVDRILACLPTPSFLRLRAACRRFYHLLFSSPFLHSH. 2 consecutive transmembrane segments (helical) span residues 72-92 and 112-132; these read LLLS…GHLL and VAGG…LAFL. Kelch repeat units lie at residues 229–277, 284–339, and 350–397; these read MAFA…ELGG, RVAL…AEGG, and YVVL…GAAG.

In terms of assembly, part of a putative SCF (ASK/Cullin/F-box) ubiquitin ligase complex. Interacts with FL/APO2. In terms of tissue distribution, expressed in apical meristems and the lateral organ primordia throughout development. Expressed in seedlings, roots, leaves, shoot apical meristem (SAM), developing panicles, and, at lower levels, in developing seeds.

Its subcellular location is the membrane. Its pathway is protein modification; protein ubiquitination. In terms of biological role, component of SCF(ASK-cullin-F-box) E3 ubiquitin ligase complexes, which may mediate the ubiquitination and subsequent proteasomal degradation of target proteins. Together with FL/APO2, involved in the temporal regulation of meristem identity during both vegetative and reproductive developments in an APO2-dependent manner. Promotes spikelet formation by suppressing the precocious conversion of inflorescence meristems to spikelet meristems, probably via a positive regulation of class-C floral homeotic genes, but not of class-B genes, and through the control of cell proliferation in meristems. Mediates culm development and strength/diameter enhancement at internodes. Required for the regulation of the plastochron, floral organ identity, and floral determinacy. Controls the number of primary rachis branches (PRBs). May trigger the formation of vascular bundle systems which, consequently, promote carbohydrate translocation to panicles. Involved in ozone-induced grain yield regulation. This chain is Protein ABERRANT PANICLE ORGANIZATION 1, found in Oryza sativa subsp. japonica (Rice).